Reading from the N-terminus, the 142-residue chain is Large ribosomal subunit protein bL17 (142 aa).

This sequence belongs to the bacterial ribosomal protein bL17 family. Part of the 50S ribosomal subunit. Contacts protein L32.

The chain is Large ribosomal subunit protein bL17 from Chlamydia caviae (strain ATCC VR-813 / DSM 19441 / 03DC25 / GPIC) (Chlamydophila caviae).